We begin with the raw amino-acid sequence, 219 residues long: Elongation factor Ts, chloroplastic (219 aa).

It belongs to the EF-Ts family.

Its subcellular location is the plastid. The protein resides in the chloroplast. Its function is as follows. Associates with the EF-Tu.GDP complex and induces the exchange of GDP to GTP. It remains bound to the aminoacyl-tRNA.EF-Tu.GTP complex up to the GTP hydrolysis stage on the ribosome. The chain is Elongation factor Ts, chloroplastic (tsf) from Rhodomonas salina (Cryptomonas salina).